Consider the following 550-residue polypeptide: Arginine--tRNA ligase (550 aa).

The 'HIGH' region signature appears at 130 to 140 (ANPTGPIHIGG).

The protein belongs to the class-I aminoacyl-tRNA synthetase family. Monomer.

Its subcellular location is the cytoplasm. The enzyme catalyses tRNA(Arg) + L-arginine + ATP = L-arginyl-tRNA(Arg) + AMP + diphosphate. This Mycobacterium tuberculosis (strain CDC 1551 / Oshkosh) protein is Arginine--tRNA ligase (argS).